Consider the following 383-residue polypeptide: 3-dehydroquinate synthase (383 aa).

NAD(+)-binding positions include 81-86 (EGEVSK), 115-119 (GVVGD), 139-140 (TS), K152, and K161. The Zn(2+) site is built by E194, H256, and H274.

Belongs to the sugar phosphate cyclases superfamily. Dehydroquinate synthase family. Co(2+) serves as cofactor. Zn(2+) is required as a cofactor. Requires NAD(+) as cofactor.

The protein resides in the cytoplasm. The enzyme catalyses 7-phospho-2-dehydro-3-deoxy-D-arabino-heptonate = 3-dehydroquinate + phosphate. It functions in the pathway metabolic intermediate biosynthesis; chorismate biosynthesis; chorismate from D-erythrose 4-phosphate and phosphoenolpyruvate: step 2/7. In terms of biological role, catalyzes the conversion of 3-deoxy-D-arabino-heptulosonate 7-phosphate (DAHP) to dehydroquinate (DHQ). In Nitrobacter winogradskyi (strain ATCC 25391 / DSM 10237 / CIP 104748 / NCIMB 11846 / Nb-255), this protein is 3-dehydroquinate synthase.